Reading from the N-terminus, the 40-residue chain is Metallothionein-1 (40 aa).

This sequence belongs to the metallothionein superfamily. Type 5 family.

In terms of biological role, this protein binds cations of several transition elements. It is thought to be involved in detoxification processes. The sequence is that of Metallothionein-1 (MtnA) from Drosophila ananassae (Fruit fly).